A 268-amino-acid polypeptide reads, in one-letter code: NADH-quinone oxidoreductase subunit B 2 (268 aa).

Positions 42, 43, 108, and 138 each coordinate [4Fe-4S] cluster. The disordered stretch occupies residues 237–268 (SPNKAKGVAPEIRHNDLKRPAVEVDHARDEQR). Residues 247–268 (EIRHNDLKRPAVEVDHARDEQR) show a composition bias toward basic and acidic residues.

It belongs to the complex I 20 kDa subunit family. NDH-1 is composed of 14 different subunits. Subunits NuoB, C, D, E, F, and G constitute the peripheral sector of the complex. It depends on [4Fe-4S] cluster as a cofactor.

It is found in the cell membrane. The catalysed reaction is a quinone + NADH + 5 H(+)(in) = a quinol + NAD(+) + 4 H(+)(out). Functionally, NDH-1 shuttles electrons from NADH, via FMN and iron-sulfur (Fe-S) centers, to quinones in the respiratory chain. The immediate electron acceptor for the enzyme in this species is believed to be ubiquinone. Couples the redox reaction to proton translocation (for every two electrons transferred, four hydrogen ions are translocated across the cytoplasmic membrane), and thus conserves the redox energy in a proton gradient. The chain is NADH-quinone oxidoreductase subunit B 2 from Roseiflexus castenholzii (strain DSM 13941 / HLO8).